We begin with the raw amino-acid sequence, 323 residues long: 4-hydroxyphenylpyruvate 3-dimethylallyltransferase (323 aa).

Arginine 160 and glutamate 281 together coordinate substrate.

Belongs to the aromatic prenyltransferase family. As to quaternary structure, monomer.

Its subcellular location is the cytoplasm. It carries out the reaction 3-(4-hydroxyphenyl)pyruvate + dimethylallyl diphosphate = 3-dimethylallyl-4-hydroxyphenylpyruvate + diphosphate. It functions in the pathway antibiotic biosynthesis; novobiocin biosynthesis. In terms of biological role, magnesium-independent aromatic prenyltransferase that catalyzes the irreversible transfer of a dimethylallyl group to 4-hydroxyphenylpyruvate to produce the ring A structure in the novobiocin biosynthesis pathway. Novobiocin is an aminocoumarin family antibiotic that targets bacterial DNA gyrases. It is able to prenylate many different compounds, including the phenylpropanoids 4-coumarate and caffeate, the plant polyketide resveratrol, the (iso)flavonoid naringenin, apigenin, daidzein and genistein, and the dihydroxynaphthalenes 1,6-DHN and 2,7-DHN. This chain is 4-hydroxyphenylpyruvate 3-dimethylallyltransferase, found in Streptomyces niveus (Streptomyces spheroides).